Here is a 1239-residue protein sequence, read N- to C-terminus: Erythroid differentiation-related factor 1 (1239 aa).

4 disordered regions span residues 1 to 39 (MGDP…QGSA), 219 to 269 (AQPV…REPL), 517 to 559 (PKKE…DPAD), and 620 to 646 (KKES…TRGG). 2 stretches are compositionally biased toward low complexity: residues 9–28 (AEAS…LSQA) and 253–263 (SSVSEDPSASS). Acidic residues predominate over residues 530 to 547 (NSDESYSEEEEEMADSDE). TPR repeat units follow at residues 693 to 726 (SKAY…HDTY) and 914 to 953 (AQAH…LGTR).

Its subcellular location is the nucleus. In terms of biological role, transcription factor involved in erythroid differentiation. Involved in transcriptional activation of the globin gene. This chain is Erythroid differentiation-related factor 1 (Edrf1), found in Mus musculus (Mouse).